The sequence spans 455 residues: Beta-1,4-mannosyltransferase bre-3 (455 aa).

It belongs to the glycosyltransferase 2 family. Endothelial cells.

It is found in the cytoplasm. Its pathway is protein modification; protein glycosylation. Functionally, glycosyltransferase with a proposed role in glycosphingolipid biosynthesis. Involved in susceptibility to pore-forming crystal toxins in conjunction with bre-1, bre-2, bre-4 and bre-5. Involved in resistance to the nematotoxic C.cinerea galectin Cgl2. Has a role in determining brood size. The polypeptide is Beta-1,4-mannosyltransferase bre-3 (bre-3) (Caenorhabditis elegans).